We begin with the raw amino-acid sequence, 109 residues long: Cell division suppressor protein YneA (109 aa).

The 52-residue stretch at 39 to 90 folds into the LysM domain; that stretch reads SEVNVSEGDSLWALADQYAGKSDMAKADFVSWVEKENNLADGHVEAGDSVVI.

The protein belongs to the YneA family.

It is found in the cytoplasm. Its function is as follows. Inhibits cell division during the SOS response. Affects a later stage of the cell division protein assembly, after the assembly of the Z ring, by probably suppressing recruitment of FtsL and/or DivIC to the division machinery. This is Cell division suppressor protein YneA from Listeria monocytogenes serotype 4b (strain CLIP80459).